The chain runs to 132 residues: Small ribosomal subunit protein uS8c (132 aa).

Belongs to the universal ribosomal protein uS8 family. Part of the 30S ribosomal subunit.

It is found in the plastid. The protein localises to the chloroplast. Its function is as follows. One of the primary rRNA binding proteins, it binds directly to 16S rRNA central domain where it helps coordinate assembly of the platform of the 30S subunit. The sequence is that of Small ribosomal subunit protein uS8c (rps8) from Gracilaria tenuistipitata var. liui (Red alga).